Here is a 100-residue protein sequence, read N- to C-terminus: RxLR effector protein Avrblb2 (100 aa).

Positions Met1–Ala22 are cleaved as a signal peptide. The RxLR-dEER signature appears at Arg43–Arg57. A Calmodulin-binding motif motif is present at residues Arg78 to Lys82.

Belongs to the RxLR effector family. As to quaternary structure, interacts with the host papain-like cysteine protease C14. Interacts with the host calmodulin.

The protein localises to the secreted. It is found in the host cell membrane. Functionally, secreted effector that acts as an elicitor of hypersensitive response (HR) specifically on plants carrying defense protein Rpi-blb2. Enhances P.infestans colonization of Nicotiana benthamiana leaves. Interacts with, and subsequently prevents secretion into the apoplast of the host papain-like cysteine protease C14, thus promoting virulence by interfering with the execution of host defenses. Associates with calmodulin at the host plasma membrane to interfere with plant defense-associated calcium signaling in hosts. This chain is RxLR effector protein Avrblb2, found in Phytophthora infestans (strain T30-4) (Potato late blight agent).